Reading from the N-terminus, the 234-residue chain is Thiamine-phosphate synthase (234 aa).

Residues 65-69 and asparagine 97 each bind 4-amino-2-methyl-5-(diphosphooxymethyl)pyrimidine; that span reads QYRNK. Mg(2+)-binding residues include aspartate 98 and aspartate 117. Serine 136 is a 4-amino-2-methyl-5-(diphosphooxymethyl)pyrimidine binding site. 163-165 contributes to the 2-[(2R,5Z)-2-carboxy-4-methylthiazol-5(2H)-ylidene]ethyl phosphate binding site; that stretch reads SHT. Lysine 166 is a 4-amino-2-methyl-5-(diphosphooxymethyl)pyrimidine binding site. Residues glycine 192 and 212–213 each bind 2-[(2R,5Z)-2-carboxy-4-methylthiazol-5(2H)-ylidene]ethyl phosphate; that span reads IS.

The protein belongs to the thiamine-phosphate synthase family. Mg(2+) serves as cofactor.

It carries out the reaction 2-[(2R,5Z)-2-carboxy-4-methylthiazol-5(2H)-ylidene]ethyl phosphate + 4-amino-2-methyl-5-(diphosphooxymethyl)pyrimidine + 2 H(+) = thiamine phosphate + CO2 + diphosphate. The catalysed reaction is 2-(2-carboxy-4-methylthiazol-5-yl)ethyl phosphate + 4-amino-2-methyl-5-(diphosphooxymethyl)pyrimidine + 2 H(+) = thiamine phosphate + CO2 + diphosphate. It catalyses the reaction 4-methyl-5-(2-phosphooxyethyl)-thiazole + 4-amino-2-methyl-5-(diphosphooxymethyl)pyrimidine + H(+) = thiamine phosphate + diphosphate. Its pathway is cofactor biosynthesis; thiamine diphosphate biosynthesis; thiamine phosphate from 4-amino-2-methyl-5-diphosphomethylpyrimidine and 4-methyl-5-(2-phosphoethyl)-thiazole: step 1/1. Condenses 4-methyl-5-(beta-hydroxyethyl)thiazole monophosphate (THZ-P) and 2-methyl-4-amino-5-hydroxymethyl pyrimidine pyrophosphate (HMP-PP) to form thiamine monophosphate (TMP). The sequence is that of Thiamine-phosphate synthase from Xylella fastidiosa (strain Temecula1 / ATCC 700964).